The primary structure comprises 477 residues: Cytoplasmic 60S subunit biogenesis factor ZNF622 (477 aa).

N-acetylalanine is present on Ala-2. 2 consecutive U1-type zinc fingers follow at residues Tyr-4–His-28 and Thr-67–His-91. Positions Ala-135–Asp-212 are disordered. Residues Gly-167–Pro-178 show a composition bias toward basic and acidic residues. The span at Glu-196–Asp-212 shows a compositional bias: acidic residues. Position 276 is a phosphoserine (Ser-276).

This sequence belongs to the REI1 family. In terms of assembly, homo- and heterodimer. Associates with pre-60S ribosomal particles. Interacts with MELK and MYBL2. Interacts with DNAJC21. Post-translationally, phosphorylated by MELK. The phosphorylation may redirect the protein to the nucleus. Ubiquitinated by HECTD1, leading to its degradation. As to expression, expressed in lung, kidney, spleen, liver and brain with lowest expression in kidney.

It is found in the cytoplasm. It localises to the nucleus. In terms of biological role, pre-60S-associated cytoplasmic factor involved in the cytoplasmic maturation of the 60S subunit. This is Cytoplasmic 60S subunit biogenesis factor ZNF622 from Homo sapiens (Human).